The sequence spans 230 residues: uncharacterized protein (230 aa).

The protein belongs to the transferase hexapeptide repeat family.

This is an uncharacterized protein from Escherichia coli O6:K15:H31 (strain 536 / UPEC).